Reading from the N-terminus, the 568-residue chain is N66 matrix protein (568 aa).

Positions 1–22 (MWRMTTLLHLTALLVLIPLCHC) are cleaved as a signal peptide. One can recognise an Alpha-carbonic anhydrase domain in the interval 55 to 567 (AGFSYNRDIC…KHPLRVYKNS (513 aa)). Residues His-154, His-156, and His-179 each contribute to the Zn(2+) site. Residues 259-421 (NGNNGNNGNG…NGYNGDNGNS (163 aa)) are disordered. The segment covering 280 to 290 (GNNGNGNGNNG) has biased composition (gly residues). Low complexity predominate over residues 291-318 (YNGNNGYNGNNGNNGNGNNDNNGNDNNG). Gly residues-rich tracts occupy residues 319-352 (NNGG…GNNG) and 362-380 (NGNG…GNNG). Residue Asn-389 is glycosylated (N-linked (GlcNAc...) asparagine). Positions 390–413 (GSNGNNGGNGNNGNNGDNGNGDNG) are enriched in gly residues. A substrate-binding site is contributed by 506–507 (TT). Asn-511 is a glycosylation site (N-linked (GlcNAc...) asparagine).

This sequence belongs to the alpha-carbonic anhydrase family. In terms of assembly, homooligomer; disulfide-linked. May also be disulfide-linked to insoluble organic matrix. It depends on Zn(2+) as a cofactor. Expressed in both the dorsal region of the mantle and the mantle edge. Is dispersed in calcium carbonate and also linked by disulfide bonds to the organic core of nacre.

The protein resides in the secreted. It is found in the extracellular space. The protein localises to the extracellular matrix. The catalysed reaction is hydrogencarbonate + H(+) = CO2 + H2O. Functionally, acts as a negative regulator for calcification in the shells of mollusks. May function both as a calcium concentrator and as a carbonic anhydrase required for production of carbonate ions, which are assembled to CaCO(3) at mineralization sites. Is important for shell formation in both the calcitic prismatic layer and the aragonitic nacreous layer. The chain is N66 matrix protein from Pinctada maxima (Silver-lipped pearl oyster).